We begin with the raw amino-acid sequence, 180 residues long: Translation initiation factor IF-3 (180 aa).

This sequence belongs to the IF-3 family. Monomer.

Its subcellular location is the cytoplasm. In terms of biological role, IF-3 binds to the 30S ribosomal subunit and shifts the equilibrium between 70S ribosomes and their 50S and 30S subunits in favor of the free subunits, thus enhancing the availability of 30S subunits on which protein synthesis initiation begins. The polypeptide is Translation initiation factor IF-3 (Shewanella baltica (strain OS223)).